Reading from the N-terminus, the 230-residue chain is Heptaprenylglyceryl phosphate synthase (230 aa).

K12 is a binding site for sn-glycerol 1-phosphate. D14 and T40 together coordinate Mg(2+). Residues 159–164 (YIEYSG), G189, and 209–210 (GD) each bind sn-glycerol 1-phosphate.

Belongs to the GGGP/HepGP synthase family. Group I subfamily. As to quaternary structure, homodimer. The cofactor is Mg(2+).

The catalysed reaction is sn-glycerol 1-phosphate + all-trans-heptaprenyl diphosphate = 3-heptaprenyl-sn-glycero-1-phosphate + diphosphate. Its pathway is membrane lipid metabolism; glycerophospholipid metabolism. Functionally, prenyltransferase that catalyzes in vivo the transfer of the heptaprenyl moiety of heptaprenyl pyrophosphate (HepPP; 35 carbon atoms) to the C3 hydroxyl of sn-glycerol-1-phosphate (G1P), producing heptaprenylglyceryl phosphate (HepGP). This reaction is an ether-bond-formation step in the biosynthesis of archaea-type G1P-based membrane lipids found in Bacillales. This is Heptaprenylglyceryl phosphate synthase from Staphylococcus aureus (strain JH1).